Reading from the N-terminus, the 214-residue chain is GTP-binding nuclear protein Ran (214 aa).

Positions 6–170 constitute a Small GTPase Ran-type domain; the sequence is YIPQYKLILV…LWLARRLSNQ (165 aa). 17 to 24 is a GTP binding site; that stretch reads DGGVGKTT. The switch-I stretch occupies residues 36 to 44; the sequence is KKYIPTLGV. GTP contacts are provided by residues Gly67, 121-124, and 149-151; these read NKVD and SAR. The segment at 67–83 is switch-II; sequence GQEKFGGLRDGYYIKSD.

This sequence belongs to the small GTPase superfamily. Ran family. Found in a nuclear export complex with RanGTP, exportin and pre-miRNA.

The protein resides in the nucleus. Its function is as follows. GTP-binding protein involved in nucleocytoplasmic transport. Required for the import of protein into the nucleus and also for RNA export. Involved in chromatin condensation and control of cell cycle. This Plasmodium falciparum protein is GTP-binding nuclear protein Ran.